The primary structure comprises 891 residues: uncharacterized protein (891 aa).

An N-terminal signal peptide occupies residues 1-20 (MKILKSLVLLVLFMAMPAKA). The next 6 helical transmembrane spans lie at 525–545 (VTIFGLMFVTGALKLTAVEVI), 568–588 (TYFFSAFTDGIDFFVTNVVGA), 614–634 (LLFIELLQIHNGLAFIAIITI), 652–672 (VIAFIGVTVMISLAPFFIILM), 685–705 (ISTLLSYVVQPTILLIFFLLI), and 776–796 (FLVLFTTALLFYSYCLMSYSL).

This sequence belongs to the TrbL/VirB6 family.

It is found in the cell membrane. This is an uncharacterized protein from Rickettsia conorii (strain ATCC VR-613 / Malish 7).